The primary structure comprises 264 residues: TLC domain-containing protein 2 (264 aa).

The next 6 membrane-spanning stretches (helical) occupy residues 3–23, 42–62, 77–97, 114–134, 169–189, and 199–219; these read PTGLLVAGASFLAFRGLHWGL, LCVSLAHSLLSGTGALLGLSL, WALVLVAVSVGYFLADGADLL, VVVSCLSTAVLSGHYVGFSMV, SLATLALFRLVPLGWMSLWLF, and LVTLGGIGLVTVGIMSIILGI. The TLC domain occupies 34–227; the sequence is RDRWQWWNLC…GIRILVNDVL (194 aa). A disordered region spans residues 230–264; the sequence is RPHPPSPGHEKTRGTRTRRDNGPVTSNSSTLSLKD. A compositionally biased stretch (basic and acidic residues) spans 237–250; sequence GHEKTRGTRTRRDN. Positions 252–264 are enriched in polar residues; sequence PVTSNSSTLSLKD.

Belongs to the TLCD family.

It localises to the cell membrane. Functionally, regulates the composition and fluidity of the plasma membrane. Inhibits the incorporation of membrane-fluidizing phospholipids containing omega-3 long-chain polyunsaturated fatty acids (LCPUFA) and thereby promotes membrane rigidity. Does not appear to have any effect on LCPUFA synthesis. This Homo sapiens (Human) protein is TLC domain-containing protein 2 (TLCD2).